We begin with the raw amino-acid sequence, 59 residues long: Single-pass membrane and coiled-coil domain-containing protein 4 (59 aa).

A disordered region spans residues 1–23 (MRQLKGKPKKETSKDKKERKQAM). Over residues 9–22 (KKETSKDKKERKQA) the composition is skewed to basic and acidic residues. The stretch at 9 to 31 (KKETSKDKKERKQAMQEARQQIT) forms a coiled coil. The chain crosses the membrane as a helical span at residues 32–52 (TVVLPTLAVVVALIVVFVYVA).

The protein belongs to the SMCO4 family.

Its subcellular location is the membrane. The chain is Single-pass membrane and coiled-coil domain-containing protein 4 (smco4) from Xenopus laevis (African clawed frog).